A 747-amino-acid polypeptide reads, in one-letter code: Sushi domain-containing protein 1 (747 aa).

An N-terminal signal peptide occupies residues 1–29 (MGRGPWDAGPSRRLLPLLLLLGLARGAAG). Residues 30 to 721 (APGPDGLDVC…WAQVKDSSLM (692 aa)) are Extracellular-facing. The region spanning 35 to 72 (GLDVCATCHEHATCQQREGKKICICNYGFVGNGRTQCV) is the EGF-like 1 domain. Intrachain disulfides connect Cys-39-Cys-48, Cys-42-Cys-57, Cys-59-Cys-71, Cys-77-Cys-91, and Cys-85-Cys-100. The EGF-like 2; calcium-binding domain occupies 73–112 (DKNECQFGATLVCGNHTSCHNTPGGFYCICLEGYRATNNN). N-linked (GlcNAc...) asparagine glycosylation is found at Asn-87 and Asn-112. An EGF-like 3; calcium-binding domain is found at 125-162 (DIDECEVSGLCRHGGRCVNTHGSFECYCMDGYLPRNGP). 6 disulfide bridges follow: Cys-129/Cys-141, Cys-135/Cys-150, Cys-179/Cys-221, Cys-206/Cys-234, Cys-239/Cys-281, and Cys-266/Cys-294. 2 Sushi domains span residues 177-236 (IDCG…HCQE) and 237-296 (INCG…TCTE). Residue Asn-193 is glycosylated (N-linked (GlcNAc...) asparagine). A glycan (N-linked (GlcNAc...) asparagine) is linked at Asn-253. Residues Asn-348, Asn-367, and Asn-563 are each glycosylated (N-linked (GlcNAc...) asparagine). The helical transmembrane segment at 722–742 (LLQMAGVGLGSLAVVIILTFL) threads the bilayer. Topologically, residues 743–747 (SFSAV) are cytoplasmic.

Its subcellular location is the membrane. This Homo sapiens (Human) protein is Sushi domain-containing protein 1 (SUSD1).